A 208-amino-acid polypeptide reads, in one-letter code: Putative 3-methyladenine DNA glycosylase (208 aa).

This sequence belongs to the DNA glycosylase MPG family.

This chain is Putative 3-methyladenine DNA glycosylase, found in Lactobacillus delbrueckii subsp. bulgaricus (strain ATCC BAA-365 / Lb-18).